The following is a 1071-amino-acid chain: Serine/threonine-protein phosphatase 6 regulatory ankyrin repeat subunit C (1071 aa).

ANK repeat units lie at residues 7–36, 40–69, 73–102, 106–135, 139–168, 172–201, 205–234, 238–267, 271–301, 305–334, 338–367, 371–400, 422–451, 455–484, 488–539, 543–573, 578–607, 611–640, 645–674, 681–710, 714–743, 747–776, 784–814, 816–845, 852–881, 885–915, 919–951, and 955–984; these read SDQP…EVNA, ERRT…NVNA, VWLT…DVTA, YWQT…SLNM, TGRA…NLSA, KDRQ…DKSC, RGYT…EIDE, FGNT…NVNQ, RGYT…DVNM, EGKS…EIDC, YGNT…DTAR, HGMF…LYSI, FGRT…DMNK, FGRT…EVNE, SGCT…DPCL, KGYS…TLGD, GSIS…CVDV, VGRS…SCLL, SKWG…GADL, EGQT…CPDM, RGRT…SVLS, QGRS…HSQP, HGYT…SIQE, NPFT…CNSL, KGRT…DIDA, SGRS…DLSL, NKNT…LINA, and MLQM…TVLA.

As to quaternary structure, protein phosphatase 6 (PP6) holoenzyme is proposed to be a heterotrimeric complex formed by the catalytic subunit, a SAPS domain-containing subunit (PP6R) and an ankyrin repeat-domain containing regulatory subunit (ARS).

Putative regulatory subunit of protein phosphatase 6 (PP6) that may be involved in the recognition of phosphoprotein substrates. This is Serine/threonine-protein phosphatase 6 regulatory ankyrin repeat subunit C (ankrd52) from Danio rerio (Zebrafish).